Consider the following 370-residue polypeptide: MAKLSLKNIAKRYPGAERRVLEEISAEIADGEFVVIVGPSGCGKSTLLRMVAGLESTEDGEIRIGERLVNQLEPKDRDIAMVFQNYALYPHMTVAENMGYALKLKGLKKVEIMERVLKVAAVLELEQLLQRKPRELSGGQRQRVAMGRAIVREPAVFLFDEPLSNLDAKLRGQMRLEIQRLHRRLATTSLYVTHDQVEAMTLADRVIVLNKGHIEQIGAPDEIYDRPATAFVAAFMGSPGMNLFDAQADESGERLLLGDGVSLALPAANPALAGRRLKAGIRPEHLRAAGEGGETLSLRVDSLEMLGADNYVYGLLAGQNVVARLAHGHRPEPGSRLEVAVRAESLHLFDAETQRRIEHAAASQASLAVS.

Positions 4 to 236 (LSLKNIAKRY…PATAFVAAFM (233 aa)) constitute an ABC transporter domain. An ATP-binding site is contributed by 38–45 (GPSGCGKS).

This sequence belongs to the ABC transporter superfamily. sn-glycerol-3-phosphate importer (TC 3.A.1.1.3) family. As to quaternary structure, the complex is composed of two ATP-binding proteins (UgpC), two transmembrane proteins (UgpA and UgpE) and a solute-binding protein (UgpB).

Its subcellular location is the cell inner membrane. It carries out the reaction sn-glycerol 3-phosphate(out) + ATP + H2O = sn-glycerol 3-phosphate(in) + ADP + phosphate + H(+). Part of the ABC transporter complex UgpBAEC involved in sn-glycerol-3-phosphate (G3P) import. Responsible for energy coupling to the transport system. The polypeptide is sn-glycerol-3-phosphate import ATP-binding protein UgpC (Chromobacterium violaceum (strain ATCC 12472 / DSM 30191 / JCM 1249 / CCUG 213 / NBRC 12614 / NCIMB 9131 / NCTC 9757 / MK)).